Consider the following 263-residue polypeptide: Proteasome subunit beta type-5 (263 aa).

Residues Met-1–Gly-59 constitute a propeptide, removed in mature form. Thr-60 (nucleophile) is an active-site residue. Residue Ala-108 participates in bortezomib binding.

Belongs to the peptidase T1B family. As to quaternary structure, the 26S proteasome consists of a 20S proteasome core and two 19S regulatory subunits. The 20S proteasome core is a barrel-shaped complex made of 28 subunits that are arranged in four stacked rings. The two outer rings are each formed by seven alpha subunits, and the two inner rings are formed by seven beta subunits. The proteolytic activity is exerted by three beta-subunits PSMB5, PSMB6 and PSMB7. Directly interacts with POMP. Interacts with ABCB1 and TAP1. In terms of assembly, (Microbial infection) Interacts with HIV-1 TAT protein.

It is found in the cytoplasm. Its subcellular location is the nucleus. The enzyme catalyses Cleavage of peptide bonds with very broad specificity.. Functionally, component of the 20S core proteasome complex involved in the proteolytic degradation of most intracellular proteins. This complex plays numerous essential roles within the cell by associating with different regulatory particles. Associated with two 19S regulatory particles, forms the 26S proteasome and thus participates in the ATP-dependent degradation of ubiquitinated proteins. The 26S proteasome plays a key role in the maintenance of protein homeostasis by removing misfolded or damaged proteins that could impair cellular functions, and by removing proteins whose functions are no longer required. Associated with the PA200 or PA28, the 20S proteasome mediates ubiquitin-independent protein degradation. This type of proteolysis is required in several pathways including spermatogenesis (20S-PA200 complex) or generation of a subset of MHC class I-presented antigenic peptides (20S-PA28 complex). Within the 20S core complex, PSMB5 displays a chymotrypsin-like activity. In Homo sapiens (Human), this protein is Proteasome subunit beta type-5.